Here is a 222-residue protein sequence, read N- to C-terminus: Protein-L-isoaspartate O-methyltransferase (222 aa).

Ser-73 is an active-site residue.

This sequence belongs to the methyltransferase superfamily. L-isoaspartyl/D-aspartyl protein methyltransferase family.

It is found in the cytoplasm. The enzyme catalyses [protein]-L-isoaspartate + S-adenosyl-L-methionine = [protein]-L-isoaspartate alpha-methyl ester + S-adenosyl-L-homocysteine. In terms of biological role, catalyzes the methyl esterification of L-isoaspartyl residues in peptides and proteins that result from spontaneous decomposition of normal L-aspartyl and L-asparaginyl residues. It plays a role in the repair and/or degradation of damaged proteins. The chain is Protein-L-isoaspartate O-methyltransferase from Chromobacterium violaceum (strain ATCC 12472 / DSM 30191 / JCM 1249 / CCUG 213 / NBRC 12614 / NCIMB 9131 / NCTC 9757 / MK).